The following is a 256-amino-acid chain: Enolase-phosphatase E1 (256 aa).

Residues Asp14 and Glu16 each coordinate Mg(2+). Substrate-binding positions include Ser142 to Ser143 and Lys176. Asp201 contacts Mg(2+).

Belongs to the HAD-like hydrolase superfamily. MasA/MtnC family. Monomer. Requires Mg(2+) as cofactor.

It localises to the cytoplasm. The protein localises to the nucleus. It carries out the reaction 5-methylsulfanyl-2,3-dioxopentyl phosphate + H2O = 1,2-dihydroxy-5-(methylsulfanyl)pent-1-en-3-one + phosphate. The protein operates within amino-acid biosynthesis; L-methionine biosynthesis via salvage pathway; L-methionine from S-methyl-5-thio-alpha-D-ribose 1-phosphate: step 3/6. It functions in the pathway amino-acid biosynthesis; L-methionine biosynthesis via salvage pathway; L-methionine from S-methyl-5-thio-alpha-D-ribose 1-phosphate: step 4/6. Its function is as follows. Bifunctional enzyme that catalyzes the enolization of 2,3-diketo-5-methylthiopentyl-1-phosphate (DK-MTP-1-P) into the intermediate 2-hydroxy-3-keto-5-methylthiopentenyl-1-phosphate (HK-MTPenyl-1-P), which is then dephosphorylated to form the acireductone 1,2-dihydroxy-3-keto-5-methylthiopentene (DHK-MTPene). This Drosophila erecta (Fruit fly) protein is Enolase-phosphatase E1.